Reading from the N-terminus, the 203-residue chain is Ras-like protein 1 (203 aa).

Residue 17 to 24 (GGGGVGKS) participates in GTP binding. Residues 39–47 (YDPTIEDSY) carry the Effector region motif. GTP contacts are provided by residues 64–68 (DTAGQ) and 123–126 (NKCD). Cys200 carries the cysteine methyl ester modification. Cys200 carries the S-farnesyl cysteine lipid modification. Positions 201–203 (ILM) are cleaved as a propeptide — removed in mature form.

Belongs to the small GTPase superfamily. Ras family.

It is found in the cell membrane. It catalyses the reaction GTP + H2O = GDP + phosphate + H(+). Alternates between an inactive form bound to GDP and an active form bound to GTP. Activated by a guanine nucleotide-exchange factor (GEF) and inactivated by a GTPase-activating protein (GAP). In Mucor circinelloides f. lusitanicus (Mucor racemosus var. lusitanicus), this protein is Ras-like protein 1 (RAS1).